The sequence spans 324 residues: DNA repair and recombination protein RadA (324 aa).

ATP is bound at residue 114–121 (GEFGSGKT).

It belongs to the eukaryotic RecA-like protein family.

Involved in DNA repair and in homologous recombination. Binds and assemble on single-stranded DNA to form a nucleoprotein filament. Hydrolyzes ATP in a ssDNA-dependent manner and promotes DNA strand exchange between homologous DNA molecules. This Saccharolobus islandicus (strain Y.N.15.51 / Yellowstone #2) (Sulfolobus islandicus) protein is DNA repair and recombination protein RadA.